The chain runs to 471 residues: ATP synthase subunit beta (471 aa).

Position 156-163 (156-163) interacts with ATP; sequence GGAGVGKT.

The protein belongs to the ATPase alpha/beta chains family. In terms of assembly, F-type ATPases have 2 components, CF(1) - the catalytic core - and CF(0) - the membrane proton channel. CF(1) has five subunits: alpha(3), beta(3), gamma(1), delta(1), epsilon(1). CF(0) has three main subunits: a(1), b(2) and c(9-12). The alpha and beta chains form an alternating ring which encloses part of the gamma chain. CF(1) is attached to CF(0) by a central stalk formed by the gamma and epsilon chains, while a peripheral stalk is formed by the delta and b chains.

Its subcellular location is the cell membrane. The catalysed reaction is ATP + H2O + 4 H(+)(in) = ADP + phosphate + 5 H(+)(out). Functionally, produces ATP from ADP in the presence of a proton gradient across the membrane. The catalytic sites are hosted primarily by the beta subunits. The polypeptide is ATP synthase subunit beta (Macrococcus caseolyticus (strain JCSC5402) (Macrococcoides caseolyticum)).